The following is a 158-amino-acid chain: Cyclic pyranopterin monophosphate synthase (158 aa).

Residues 75 to 77 (LCH) and 113 to 114 (ME) each bind substrate. Residue D128 is part of the active site.

It belongs to the MoaC family. Homohexamer; trimer of dimers.

It carries out the reaction (8S)-3',8-cyclo-7,8-dihydroguanosine 5'-triphosphate = cyclic pyranopterin phosphate + diphosphate. It functions in the pathway cofactor biosynthesis; molybdopterin biosynthesis. Its function is as follows. Catalyzes the conversion of (8S)-3',8-cyclo-7,8-dihydroguanosine 5'-triphosphate to cyclic pyranopterin monophosphate (cPMP). The protein is Cyclic pyranopterin monophosphate synthase of Roseiflexus castenholzii (strain DSM 13941 / HLO8).